The sequence spans 108 residues: uncharacterized protein (108 aa).

This is an uncharacterized protein from Archaeoglobus fulgidus (strain ATCC 49558 / DSM 4304 / JCM 9628 / NBRC 100126 / VC-16).